The primary structure comprises 163 residues: Inner membrane protein YcdZ (163 aa).

At 1 to 2 (MN) the chain is on the cytoplasmic side. A helical membrane pass occupies residues 3 to 23 (ILLSIAITTGILSGIWGWVAV). Position 24 (serine 24) is a topological domain, periplasmic. The chain crosses the membrane as a helical span at residues 25-45 (LGLLSWAGFLGCTAYFACPQG). Residues 46-48 (GLK) lie on the Cytoplasmic side of the membrane. A helical transmembrane segment spans residues 49 to 69 (GLAISAATLLSGVVWAMVIIY). The Periplasmic segment spans residues 70–71 (GS). A helical transmembrane segment spans residues 72-92 (ALAPHLEILGYVITGIVAFLM). Residues 93 to 98 (CIQAKQ) are Cytoplasmic-facing. The chain crosses the membrane as a helical span at residues 99–119 (LLLSFVPGTFIGACATFAGQG). Residues 120–122 (DWK) lie on the Periplasmic side of the membrane. Residues 123–143 (LVLPSLALGLIFGYAMKNSGL) traverse the membrane as a helical segment. Residues 144–163 (WLAARSAKTAHREQEIKNKA) lie on the Cytoplasmic side of the membrane.

It to E.coli YahC.

Its subcellular location is the cell inner membrane. This Escherichia coli (strain K12) protein is Inner membrane protein YcdZ (ycdZ).